Consider the following 143-residue polypeptide: NADH-quinone oxidoreductase subunit A (143 aa).

3 helical membrane passes run 8–28 (FGNV…GYLT), 63–83 (FYVV…LFPW), and 93–113 (FALI…VYAW).

The protein belongs to the complex I subunit 3 family. NDH-1 is composed of 14 different subunits. Subunits NuoA, H, J, K, L, M, N constitute the membrane sector of the complex.

Its subcellular location is the cell inner membrane. The catalysed reaction is a quinone + NADH + 5 H(+)(in) = a quinol + NAD(+) + 4 H(+)(out). NDH-1 shuttles electrons from NADH, via FMN and iron-sulfur (Fe-S) centers, to quinones in the respiratory chain. The immediate electron acceptor for the enzyme in this species is believed to be a menaquinone. Couples the redox reaction to proton translocation (for every two electrons transferred, four hydrogen ions are translocated across the cytoplasmic membrane), and thus conserves the redox energy in a proton gradient. The sequence is that of NADH-quinone oxidoreductase subunit A from Chlorobium luteolum (strain DSM 273 / BCRC 81028 / 2530) (Pelodictyon luteolum).